A 295-amino-acid chain; its full sequence is Tyrosine recombinase XerD (295 aa).

The 85-residue stretch at 1–85 (MNTIIEEYLN…TIRSFHQFAL (85 aa)) folds into the Core-binding (CB) domain. The 184-residue stretch at 106-289 (KLPDVLEIDE…SKSQIRKMYT (184 aa)) folds into the Tyr recombinase domain. Active-site residues include arginine 146, lysine 170, histidine 241, arginine 244, and histidine 267. Catalysis depends on tyrosine 276, which acts as the O-(3'-phospho-DNA)-tyrosine intermediate.

It belongs to the 'phage' integrase family. XerD subfamily. Forms a cyclic heterotetrameric complex composed of two molecules of XerC and two molecules of XerD.

The protein resides in the cytoplasm. Functionally, site-specific tyrosine recombinase, which acts by catalyzing the cutting and rejoining of the recombining DNA molecules. The XerC-XerD complex is essential to convert dimers of the bacterial chromosome into monomers to permit their segregation at cell division. It also contributes to the segregational stability of plasmids. The sequence is that of Tyrosine recombinase XerD from Staphylococcus epidermidis (strain ATCC 12228 / FDA PCI 1200).